We begin with the raw amino-acid sequence, 1333 residues long: MRNLKLLQTLEFKDIQAPGKPQCFSLRTEPGTVLIGSEHGLIEVDPVTREVKNEIPLVAEGFLPEDKSGCIVGIQDLLDQESVCIATASGDVILCNLSTHQLECVGSVASGISVMSWSPDQELVLLATGQQTLIMMTKDFEPIMEQQIHQDDFGESKFITVGWGKKETQFHGSEGRQAAFQIQTHESALPWDDHRPRVTWRGDGQFFAVSVVCPETGARKVRVWNREFALQSTSEPVPGLGPALAWKPSGSLIASTQNKPNQQDVVFFEKNGLLHGQFTLPFLKDEVKVNDLLWNADSSVLAVWLEDLQREEDSVLKTYVQLWTVGNYHWYLNECLPFSTYGKSKIVSLMWDPVIPYRLHVLCQGWHYLCYDWRWTTDRSSGDNESDLANVAVIDGNRILVTVFQQTVVPPPMCTYRLLLPHPVNQVTFCALPKKSNDLAVLDASNQISVYKCGDSPSMDPTVKLGAVGGNGFKVSLRTPHLEKRYKIQFESNEDQETNPLKLSLLSWIEEDIFLAICHSQCSPQQSVIHRLTVVPCEVDEEQGQLSVSSSISVDGIIISMCCNSKTKSVALQLADGQILKYIWESPSLAVEPWKNPGGFPIQFPYPCIQTELAMIGGEECVLGLTDRCRFFINDTEVASNITSFAVYDEFLLLTTHSHTCQCYCLKDASIKTLQAGLSSSHVSNGEILRKVERGSRIVTVVPQDTKLILQMPRGNLEVVHHRALVLAQIRKWLDKIMFKEAFECMRKLRINLNLIHDHNPEVFLQNVETFIRQIDCVNHINLFFTELKEEDVTKTMYPPPVPSSVQQSRDPGGTKLDLICDALRVAMENINPHKYCLPILTSHVKKTTPELEIVLQKVHELQGNAPSDPDAVSAEEALKYLLLLVDVNELYDHSLGTYDFDLVLMVAEKSQKDPKEYLPFLNTLKKMETNYQRFTIDKYLKRYEKAIGHLSKCGPEYFSECLNLIKDKNLYNEALKLYPPTSQEYKDISIAYGEHLMEEHQYEPAGLVFARCGAHEKALSAFLTCGSWQQTLCMAAQLNMTEEQLAGLGRTLAGKLAEQRKHSDAAIVLEQYTQDYEEAVLLLLEGAAWEEALRLVYKYNRLDIIETNIKPSILEAYKNYMAFLESQSATFSRHKERLLEVRELKERAQQVDLDDEMPHGQEADLFSETSSIVSGSEMSSKYSHSNSRISARSSKNRRKAERKKHSLKEGSPLEDLALLEALNEVVQSLDKLKDEVYRILKVLFLFEFDEQGRELQKTFQDTLQLVERSLPEIWTLTYQQNSAMPVLGPSSTANSIMASYQQQKTSVPVLDAELFVPPKINRKTQWKLSLLE.

4 positions are modified to phosphoserine: Ser-805, Ser-868, Ser-1172, and Ser-1175. A mediates dimerization region spans residues 886-1333 (VDVNELYDHS…KTQWKLSLLE (448 aa)). A disordered region spans residues 1177–1209 (SEMSSKYSHSNSRISARSSKNRRKAERKKHSLK). The segment at 1192–1210 (ARSSKNRRKAERKKHSLKE) is required for binding to tRNA. The span at 1195–1207 (SKNRRKAERKKHS) shows a compositional bias: basic residues.

It belongs to the ELP1/IKA1 family. In terms of assembly, homodimer; dimerization promotes ELP1 stability and elongator complex formation. Component of the elongator complex which consists of ELP1, ELP2, ELP3, ELP4, ELP5 and ELP6. Interacts preferentially with MAP3K14/NIK followed by IKK-alpha and IKK-beta. In terms of processing, phosphorylated.

It is found in the cytoplasm. It localises to the nucleus. It functions in the pathway tRNA modification; 5-methoxycarbonylmethyl-2-thiouridine-tRNA biosynthesis. In terms of biological role, component of the elongator complex which is required for multiple tRNA modifications, including mcm5U (5-methoxycarbonylmethyl uridine), mcm5s2U (5-methoxycarbonylmethyl-2-thiouridine), and ncm5U (5-carbamoylmethyl uridine). The elongator complex catalyzes the formation of carboxymethyluridine in the wobble base at position 34 in tRNAs. Regulates the migration and branching of projection neurons in the developing cerebral cortex, through a process depending on alpha-tubulin acetylation. ELP1 binds to tRNA, mediating interaction of the elongator complex with tRNA. May act as a scaffold protein that assembles active IKK-MAP3K14 complexes (IKKA, IKKB and MAP3K14/NIK). This Oryctolagus cuniculus (Rabbit) protein is Elongator complex protein 1 (ELP1).